Here is a 156-residue protein sequence, read N- to C-terminus: 6,7-dimethyl-8-ribityllumazine synthase (156 aa).

5-amino-6-(D-ribitylamino)uracil-binding positions include Phe-22, 57–59 (AYE), and 81–83 (TVI). Position 86–87 (86–87 (GT)) interacts with (2S)-2-hydroxy-3-oxobutyl phosphate. His-89 serves as the catalytic Proton donor. Residue Phe-114 participates in 5-amino-6-(D-ribitylamino)uracil binding. Arg-128 lines the (2S)-2-hydroxy-3-oxobutyl phosphate pocket.

The protein belongs to the DMRL synthase family. In terms of assembly, forms an icosahedral capsid composed of 60 subunits, arranged as a dodecamer of pentamers.

The enzyme catalyses (2S)-2-hydroxy-3-oxobutyl phosphate + 5-amino-6-(D-ribitylamino)uracil = 6,7-dimethyl-8-(1-D-ribityl)lumazine + phosphate + 2 H2O + H(+). It participates in cofactor biosynthesis; riboflavin biosynthesis; riboflavin from 2-hydroxy-3-oxobutyl phosphate and 5-amino-6-(D-ribitylamino)uracil: step 1/2. In terms of biological role, catalyzes the formation of 6,7-dimethyl-8-ribityllumazine by condensation of 5-amino-6-(D-ribitylamino)uracil with 3,4-dihydroxy-2-butanone 4-phosphate. This is the penultimate step in the biosynthesis of riboflavin. The polypeptide is 6,7-dimethyl-8-ribityllumazine synthase (Enterobacter sp. (strain 638)).